A 469-amino-acid chain; its full sequence is L-seryl-tRNA(Sec) selenium transferase (469 aa).

Lysine 298 carries the post-translational modification N6-(pyridoxal phosphate)lysine.

This sequence belongs to the SelA family. Requires pyridoxal 5'-phosphate as cofactor.

Its subcellular location is the cytoplasm. The catalysed reaction is L-seryl-tRNA(Sec) + selenophosphate + H(+) = L-selenocysteinyl-tRNA(Sec) + phosphate. The protein operates within aminoacyl-tRNA biosynthesis; selenocysteinyl-tRNA(Sec) biosynthesis; selenocysteinyl-tRNA(Sec) from L-seryl-tRNA(Sec) (bacterial route): step 1/1. Its function is as follows. Converts seryl-tRNA(Sec) to selenocysteinyl-tRNA(Sec) required for selenoprotein biosynthesis. The chain is L-seryl-tRNA(Sec) selenium transferase from Nitratidesulfovibrio vulgaris (strain ATCC 29579 / DSM 644 / CCUG 34227 / NCIMB 8303 / VKM B-1760 / Hildenborough) (Desulfovibrio vulgaris).